Consider the following 494-residue polypeptide: Aspartyl/glutamyl-tRNA(Asn/Gln) amidotransferase subunit B (494 aa).

This sequence belongs to the GatB/GatE family. GatB subfamily. As to quaternary structure, heterotrimer of A, B and C subunits.

It catalyses the reaction L-glutamyl-tRNA(Gln) + L-glutamine + ATP + H2O = L-glutaminyl-tRNA(Gln) + L-glutamate + ADP + phosphate + H(+). The catalysed reaction is L-aspartyl-tRNA(Asn) + L-glutamine + ATP + H2O = L-asparaginyl-tRNA(Asn) + L-glutamate + ADP + phosphate + 2 H(+). Allows the formation of correctly charged Asn-tRNA(Asn) or Gln-tRNA(Gln) through the transamidation of misacylated Asp-tRNA(Asn) or Glu-tRNA(Gln) in organisms which lack either or both of asparaginyl-tRNA or glutaminyl-tRNA synthetases. The reaction takes place in the presence of glutamine and ATP through an activated phospho-Asp-tRNA(Asn) or phospho-Glu-tRNA(Gln). The chain is Aspartyl/glutamyl-tRNA(Asn/Gln) amidotransferase subunit B from Rhodopseudomonas palustris (strain HaA2).